The chain runs to 285 residues: Acetylglutamate kinase (285 aa).

Substrate contacts are provided by residues 55-56 (GG), R77, and N171.

It belongs to the acetylglutamate kinase family. ArgB subfamily.

It localises to the cytoplasm. The enzyme catalyses N-acetyl-L-glutamate + ATP = N-acetyl-L-glutamyl 5-phosphate + ADP. Its pathway is amino-acid biosynthesis; L-arginine biosynthesis; N(2)-acetyl-L-ornithine from L-glutamate: step 2/4. Catalyzes the ATP-dependent phosphorylation of N-acetyl-L-glutamate. The chain is Acetylglutamate kinase from Chlorobaculum tepidum (strain ATCC 49652 / DSM 12025 / NBRC 103806 / TLS) (Chlorobium tepidum).